The following is a 329-amino-acid chain: 4-hydroxythreonine-4-phosphate dehydrogenase (329 aa).

The substrate site is built by H136 and T137. Residues H166, H211, and H266 each contribute to the a divalent metal cation site. 3 residues coordinate substrate: K274, N283, and R292.

Belongs to the PdxA family. In terms of assembly, homodimer. Zn(2+) is required as a cofactor. The cofactor is Mg(2+). It depends on Co(2+) as a cofactor.

It is found in the cytoplasm. It catalyses the reaction 4-(phosphooxy)-L-threonine + NAD(+) = 3-amino-2-oxopropyl phosphate + CO2 + NADH. The protein operates within cofactor biosynthesis; pyridoxine 5'-phosphate biosynthesis; pyridoxine 5'-phosphate from D-erythrose 4-phosphate: step 4/5. Catalyzes the NAD(P)-dependent oxidation of 4-(phosphooxy)-L-threonine (HTP) into 2-amino-3-oxo-4-(phosphooxy)butyric acid which spontaneously decarboxylates to form 3-amino-2-oxopropyl phosphate (AHAP). The chain is 4-hydroxythreonine-4-phosphate dehydrogenase from Shigella boydii serotype 18 (strain CDC 3083-94 / BS512).